A 450-amino-acid polypeptide reads, in one-letter code: Phosphoglucosamine mutase (450 aa).

S103 (phosphoserine intermediate) is an active-site residue. The Mg(2+) site is built by S103, D243, D245, and D247. S103 bears the Phosphoserine mark.

It belongs to the phosphohexose mutase family. The cofactor is Mg(2+). Activated by phosphorylation.

It carries out the reaction alpha-D-glucosamine 1-phosphate = D-glucosamine 6-phosphate. Functionally, catalyzes the conversion of glucosamine-6-phosphate to glucosamine-1-phosphate. The protein is Phosphoglucosamine mutase of Lactobacillus delbrueckii subsp. bulgaricus (strain ATCC 11842 / DSM 20081 / BCRC 10696 / JCM 1002 / NBRC 13953 / NCIMB 11778 / NCTC 12712 / WDCM 00102 / Lb 14).